The sequence spans 281 residues: Nicotinamide/nicotinic acid mononucleotide adenylyltransferase 1 (281 aa).

Beta-nicotinamide D-ribonucleotide is bound by residues Gly-15 and Ser-16. NAD(+)-binding residues include Gly-15, Ser-16, Phe-17, and Met-23. 15–17 (GSF) provides a ligand contact to ATP. Residue His-24 participates in ATP binding. Positions 55 and 57 each coordinate beta-nicotinamide D-ribonucleotide. Position 57 (Lys-57) interacts with NAD(+). Lys-58 lines the ATP pocket. Beta-nicotinamide D-ribonucleotide is bound by residues Trp-92 and Thr-95. Trp-92 and Thr-95 together coordinate NAD(+). The segment at 113–143 (PQQNSPVLEKPGRKRKWAEQKQDISEKKSLE) is disordered. Ser-117 carries the post-translational modification Phosphoserine. The Nuclear localization signal motif lies at 123–129 (PGRKRKW). Positions 129-143 (WAEQKQDISEKKSLE) are enriched in basic and acidic residues. NAD(+) is bound by residues Gly-158, Asp-160, Leu-170, Trp-171, Glu-217, and Asn-221. Residue 158-160 (GAD) coordinates ATP. Leu-170 and Trp-171 together coordinate beta-nicotinamide D-ribonucleotide. Position 226–229 (226–229 (TKIR)) interacts with ATP.

It belongs to the eukaryotic NMN adenylyltransferase family. In terms of assembly, homohexamer. Interacts with ADPRT/PARP1. Requires Zn(2+) as cofactor. The cofactor is Mg(2+).

Its subcellular location is the nucleus. It catalyses the reaction beta-nicotinamide D-ribonucleotide + ATP + H(+) = diphosphate + NAD(+). The enzyme catalyses nicotinate beta-D-ribonucleotide + ATP + H(+) = deamido-NAD(+) + diphosphate. Its pathway is cofactor biosynthesis; NAD(+) biosynthesis; NAD(+) from nicotinamide D-ribonucleotide: step 1/1. The protein operates within cofactor biosynthesis; NAD(+) biosynthesis; deamido-NAD(+) from nicotinate D-ribonucleotide: step 1/1. Activity is strongly inhibited by galotannin. Inhibited by P1-(adenosine-5')-P4-(nicotinic-acid-riboside-5')-tetraphosphate (Nap4AD). Catalyzes the formation of NAD(+) from nicotinamide mononucleotide (NMN) and ATP. Can also use the deamidated form; nicotinic acid mononucleotide (NaMN) as substrate with the same efficiency. Can use triazofurin monophosphate (TrMP) as substrate. Also catalyzes the reverse reaction, i.e. the pyrophosphorolytic cleavage of NAD(+). For the pyrophosphorolytic activity, prefers NAD(+) and NaAD as substrates and degrades NADH, nicotinic acid adenine dinucleotide phosphate (NHD) and nicotinamide guanine dinucleotide (NGD) less effectively. Involved in the synthesis of ATP in the nucleus, together with PARP1, PARG and NUDT5. Nuclear ATP generation is required for extensive chromatin remodeling events that are energy-consuming. Fails to cleave phosphorylated dinucleotides NADP(+), NADPH and NaADP(+). Also acts as a cofactor for glutamate and aspartate ADP-ribosylation by directing PARP1 catalytic activity to glutamate and aspartate residues on histones. Protects against axonal degeneration following mechanical or toxic insults. Delays axonal degeneration after axotomy. Results in a &gt;10-fold increase in intact neurites 72 hours after injury. Neural protection does not correlate with cellular NAD(+) levels but may still require enzyme activity. The chain is Nicotinamide/nicotinic acid mononucleotide adenylyltransferase 1 (NMNAT1) from Bos taurus (Bovine).